Reading from the N-terminus, the 229-residue chain is ATP synthase subunit a 1 (229 aa).

6 consecutive transmembrane segments (helical) span residues 25-45 (ADAVAYTWLIMLLLLLFSFLA), 86-106 (VATVGLFVLVSNLIGLIPGFF), 111-131 (NINTTAACAIVVFIATHVVGI), 142-162 (FCGPILWLAPVMFFIEVIGHL), 181-201 (LVLIIFFGLAPFLVPLPMMLM), and 202-222 (GVLVSFIQAFVFMLLTMIYIQ).

The protein belongs to the ATPase A chain family. In terms of assembly, F-type ATPases have 2 components, CF(1) - the catalytic core - and CF(0) - the membrane proton channel. CF(1) has five subunits: alpha(3), beta(3), gamma(1), delta(1), epsilon(1). CF(0) has three main subunits: a(1), b(2) and c(9-12). The alpha and beta chains form an alternating ring which encloses part of the gamma chain. CF(1) is attached to CF(0) by a central stalk formed by the gamma and epsilon chains, while a peripheral stalk is formed by the delta and b chains.

The protein resides in the cell inner membrane. Its function is as follows. Key component of the proton channel; it plays a direct role in the translocation of protons across the membrane. The chain is ATP synthase subunit a 1 from Pelobacter propionicus (strain DSM 2379 / NBRC 103807 / OttBd1).